A 150-amino-acid polypeptide reads, in one-letter code: UPF0098 protein TC_0109 (150 aa).

Belongs to the UPF0098 family.

The sequence is that of UPF0098 protein TC_0109 from Chlamydia muridarum (strain MoPn / Nigg).